Reading from the N-terminus, the 642-residue chain is Chaperone protein DnaK (642 aa).

Position 198 is a phosphothreonine; by autocatalysis (T198). A disordered region spans residues 602-642 (EAAGGAEAEAAAGGHGGASGSHDDKVVDADFEEVDGDKKGK). The span at 603–613 (AAGGAEAEAAA) shows a compositional bias: low complexity.

It belongs to the heat shock protein 70 family.

Its function is as follows. Acts as a chaperone. This chain is Chaperone protein DnaK, found in Paramagnetospirillum magneticum (strain ATCC 700264 / AMB-1) (Magnetospirillum magneticum).